Here is a 397-residue protein sequence, read N- to C-terminus: Methylthioribose kinase (397 aa).

ATP is bound by residues Asn44, Lys61, and 115 to 117; that span reads EDL. Position 233 (Asp233) interacts with substrate. Position 250-252 (250-252) interacts with ATP; that stretch reads DPE. A substrate-binding site is contributed by Arg340.

This sequence belongs to the methylthioribose kinase family. Homodimer.

The enzyme catalyses 5-(methylsulfanyl)-D-ribose + ATP = 5-(methylsulfanyl)-alpha-D-ribose 1-phosphate + ADP + H(+). It participates in amino-acid biosynthesis; L-methionine biosynthesis via salvage pathway; S-methyl-5-thio-alpha-D-ribose 1-phosphate from S-methyl-5'-thioadenosine (hydrolase route): step 2/2. Catalyzes the phosphorylation of methylthioribose into methylthioribose-1-phosphate. The polypeptide is Methylthioribose kinase (mtnK) (Bacillus subtilis (strain 168)).